The sequence spans 334 residues: Fructose-1,6-bisphosphatase class 1 (334 aa).

Residues Glu89, Asp112, Leu114, and Asp115 each coordinate Mg(2+). Substrate-binding positions include Asp115–Ser118, Asn208, Tyr241, and Lys271. A Mg(2+)-binding site is contributed by Glu277.

This sequence belongs to the FBPase class 1 family. In terms of assembly, homotetramer. Mg(2+) serves as cofactor.

It localises to the cytoplasm. The enzyme catalyses beta-D-fructose 1,6-bisphosphate + H2O = beta-D-fructose 6-phosphate + phosphate. The protein operates within carbohydrate biosynthesis; gluconeogenesis. This chain is Fructose-1,6-bisphosphatase class 1, found in Photorhabdus laumondii subsp. laumondii (strain DSM 15139 / CIP 105565 / TT01) (Photorhabdus luminescens subsp. laumondii).